Consider the following 550-residue polypeptide: Arginine--tRNA ligase (550 aa).

The short motif at 130 to 140 (ANPTGPIHIGG) is the 'HIGH' region element.

Belongs to the class-I aminoacyl-tRNA synthetase family. In terms of assembly, monomer.

It is found in the cytoplasm. The catalysed reaction is tRNA(Arg) + L-arginine + ATP = L-arginyl-tRNA(Arg) + AMP + diphosphate. This Mycolicibacterium smegmatis (strain ATCC 700084 / mc(2)155) (Mycobacterium smegmatis) protein is Arginine--tRNA ligase (argS).